A 284-amino-acid polypeptide reads, in one-letter code: Polyamine aminopropyltransferase (284 aa).

The region spanning Glu-2–Lys-237 is the PABS domain. Gln-31 contributes to the S-methyl-5'-thioadenosine binding site. 2 residues coordinate spermidine: His-62 and Asp-86. S-methyl-5'-thioadenosine-binding positions include Glu-106 and Asp-137–Gly-138. Asp-155 functions as the Proton acceptor in the catalytic mechanism. Asp-155–Asp-158 provides a ligand contact to spermidine. Pro-162 lines the S-methyl-5'-thioadenosine pocket.

It belongs to the spermidine/spermine synthase family. As to quaternary structure, homodimer or homotetramer.

It is found in the cytoplasm. The catalysed reaction is S-adenosyl 3-(methylsulfanyl)propylamine + putrescine = S-methyl-5'-thioadenosine + spermidine + H(+). Its pathway is amine and polyamine biosynthesis; spermidine biosynthesis; spermidine from putrescine: step 1/1. In terms of biological role, catalyzes the irreversible transfer of a propylamine group from the amino donor S-adenosylmethioninamine (decarboxy-AdoMet) to putrescine (1,4-diaminobutane) to yield spermidine. The protein is Polyamine aminopropyltransferase of Clostridium botulinum (strain Eklund 17B / Type B).